Here is a 334-residue protein sequence, read N- to C-terminus: MSIEQLAETAQAMVASGKGIIAIDESAGTIAKRFSSVGIENIEENRRAYRELLLTTPKLSDYISGAILFDETIRQSTKAGVPFPKYMADHGIIPGIKVDKGAYPLAGCPGELVTEGLDGLRARLEEYYKLGARFAKWRAVINIGDDIPSGMCIDANVHALARYAALCQEQGLVPMVEPEVIMDGNHDISAAYEVTEATLRSLFNALYEQNVVLEGTILKASMVIPGTDCEEQASIDEVAESTVMCLKSTVPAILPGIVFLSGGQTDAQSTAHLNAMNQLDPLPWPLSFSYGRAMQQAALKLWSQDMKGNFAKAQQVVYERAKENGLAALGKWKG.

It belongs to the class I fructose-bisphosphate aldolase family.

The catalysed reaction is beta-D-fructose 1,6-bisphosphate = D-glyceraldehyde 3-phosphate + dihydroxyacetone phosphate. Its pathway is carbohydrate degradation; glycolysis; D-glyceraldehyde 3-phosphate and glycerone phosphate from D-glucose: step 4/4. The protein is Probable fructose-bisphosphate aldolase class 1 of Xylella fastidiosa (strain 9a5c).